Here is a 500-residue protein sequence, read N- to C-terminus: Probable cytosol aminopeptidase 1 (500 aa).

Mn(2+) is bound by residues lysine 263 and aspartate 268. The active site involves lysine 275. Residues aspartate 287, aspartate 346, and glutamate 348 each coordinate Mn(2+). Arginine 350 is a catalytic residue.

The protein belongs to the peptidase M17 family. It depends on Mn(2+) as a cofactor.

The protein localises to the cytoplasm. It carries out the reaction Release of an N-terminal amino acid, Xaa-|-Yaa-, in which Xaa is preferably Leu, but may be other amino acids including Pro although not Arg or Lys, and Yaa may be Pro. Amino acid amides and methyl esters are also readily hydrolyzed, but rates on arylamides are exceedingly low.. The catalysed reaction is Release of an N-terminal amino acid, preferentially leucine, but not glutamic or aspartic acids.. Presumably involved in the processing and regular turnover of intracellular proteins. Catalyzes the removal of unsubstituted N-terminal amino acids from various peptides. The polypeptide is Probable cytosol aminopeptidase 1 (pepA1) (Shewanella oneidensis (strain ATCC 700550 / JCM 31522 / CIP 106686 / LMG 19005 / NCIMB 14063 / MR-1)).